The sequence spans 261 residues: UPF0328 protein ECU06_0100 (261 aa).

This sequence belongs to the UPF0328 family.

The protein is UPF0328 protein ECU06_0100 of Encephalitozoon cuniculi (strain GB-M1) (Microsporidian parasite).